Reading from the N-terminus, the 163-residue chain is Nucleotide-binding protein MAV_4575 (163 aa).

This sequence belongs to the YajQ family.

Nucleotide-binding protein. This chain is Nucleotide-binding protein MAV_4575, found in Mycobacterium avium (strain 104).